Consider the following 155-residue polypeptide: Transmembrane protein C1orf162 (155 aa).

Residues 1 to 28 (MGGNGSTCKPDTERQGTLSTAAPTTSPA) form a disordered region. A compositionally biased stretch (low complexity) spans 19-28 (STAAPTTSPA). A helical membrane pass occupies residues 41-61 (ILAFCAGVLLTLLLIAFIFLI). A disordered region spans residues 92-114 (ADHSKPQAPDPHSDPPAKLSSIP). A Phosphoserine modification is found at Ser140.

The protein resides in the membrane. This is Transmembrane protein C1orf162 (C1orf162) from Homo sapiens (Human).